The primary structure comprises 213 residues: Phosphatidylserine decarboxylase proenzyme (213 aa).

Ser-182 functions as the Schiff-base intermediate with substrate; via pyruvic acid in the catalytic mechanism. At Ser-182 the chain carries Pyruvic acid (Ser); by autocatalysis.

Belongs to the phosphatidylserine decarboxylase family. PSD-A subfamily. Heterodimer of a large membrane-associated beta subunit and a small pyruvoyl-containing alpha subunit. Pyruvate serves as cofactor. In terms of processing, is synthesized initially as an inactive proenzyme. Formation of the active enzyme involves a self-maturation process in which the active site pyruvoyl group is generated from an internal serine residue via an autocatalytic post-translational modification. Two non-identical subunits are generated from the proenzyme in this reaction, and the pyruvate is formed at the N-terminus of the alpha chain, which is derived from the carboxyl end of the proenzyme. The post-translation cleavage follows an unusual pathway, termed non-hydrolytic serinolysis, in which the side chain hydroxyl group of the serine supplies its oxygen atom to form the C-terminus of the beta chain, while the remainder of the serine residue undergoes an oxidative deamination to produce ammonia and the pyruvoyl prosthetic group on the alpha chain.

Its subcellular location is the cell membrane. It carries out the reaction a 1,2-diacyl-sn-glycero-3-phospho-L-serine + H(+) = a 1,2-diacyl-sn-glycero-3-phosphoethanolamine + CO2. It participates in phospholipid metabolism; phosphatidylethanolamine biosynthesis; phosphatidylethanolamine from CDP-diacylglycerol: step 2/2. Its function is as follows. Catalyzes the formation of phosphatidylethanolamine (PtdEtn) from phosphatidylserine (PtdSer). This Chlorobium phaeobacteroides (strain BS1) protein is Phosphatidylserine decarboxylase proenzyme.